The chain runs to 246 residues: uncharacterized protein (246 aa).

This is an uncharacterized protein from Borreliella burgdorferi (strain ATCC 35210 / DSM 4680 / CIP 102532 / B31) (Borrelia burgdorferi).